The primary structure comprises 125 residues: Large ribosomal subunit protein bL21 (125 aa).

Belongs to the bacterial ribosomal protein bL21 family. Part of the 50S ribosomal subunit. Contacts protein L20.

Its function is as follows. This protein binds to 23S rRNA in the presence of protein L20. This is Large ribosomal subunit protein bL21 from Synechococcus sp. (strain CC9902).